The chain runs to 74 residues: ATP synthase subunit c (74 aa).

The next 2 membrane-spanning stretches (helical) occupy residues 5–25 and 49–69; these read LAHI…IGVG and LFIG…VALL.

It belongs to the ATPase C chain family. As to quaternary structure, F-type ATPases have 2 components, F(1) - the catalytic core - and F(0) - the membrane proton channel. F(1) has five subunits: alpha(3), beta(3), gamma(1), delta(1), epsilon(1). F(0) has three main subunits: a(1), b(2) and c(10-14). The alpha and beta chains form an alternating ring which encloses part of the gamma chain. F(1) is attached to F(0) by a central stalk formed by the gamma and epsilon chains, while a peripheral stalk is formed by the delta and b chains.

Its subcellular location is the cell inner membrane. In terms of biological role, f(1)F(0) ATP synthase produces ATP from ADP in the presence of a proton or sodium gradient. F-type ATPases consist of two structural domains, F(1) containing the extramembraneous catalytic core and F(0) containing the membrane proton channel, linked together by a central stalk and a peripheral stalk. During catalysis, ATP synthesis in the catalytic domain of F(1) is coupled via a rotary mechanism of the central stalk subunits to proton translocation. Key component of the F(0) channel; it plays a direct role in translocation across the membrane. A homomeric c-ring of between 10-14 subunits forms the central stalk rotor element with the F(1) delta and epsilon subunits. The protein is ATP synthase subunit c of Ruegeria pomeroyi (strain ATCC 700808 / DSM 15171 / DSS-3) (Silicibacter pomeroyi).